Consider the following 308-residue polypeptide: Solute carrier family 25 member 47 (308 aa).

3 Solcar repeats span residues 1–80 (MDFV…CLAH), 93–206 (PTKA…LCEW), and 215–302 (PDVP…VLRL). The next 6 membrane-spanning stretches (helical) occupy residues 3-23 (FVAG…LDTV), 49-69 (VWGF…VSSV), 98-116 (ITLS…TSPT), 190-210 (GHSF…LSPA), 217-237 (VPGV…VATP), and 273-293 (VLFK…MVVF).

This sequence belongs to the mitochondrial carrier (TC 2.A.29) family. In terms of tissue distribution, specifically expressed in liver.

It is found in the mitochondrion inner membrane. The protein localises to the mitochondrion outer membrane. The catalysed reaction is NAD(+)(in) = NAD(+)(out). It catalyses the reaction acetyl-CoA(in) = acetyl-CoA(out). Functionally, mitochondrial NAD(+) transporter that acts as a 'metabolic gate' in hepatic lipogenesis. Provides NAD(+) substrate to mitochondrial SIRT3 deacetylase and enables its NAD(+)-dependent activities in mitochondrial energy metabolism. This triggers downstream activation of PRKAA1/AMPK-alpha signaling cascade that negatively regulates sterol regulatory element-binding protein (SREBP) transcriptional activities and ATP-consuming lipogenesis to restore cellular energy balance. May transport other mitochondrial metabolites having an aromatic nucleotide and phosphate groups, such as acetyl-CoA. Does not transport amino acids. The transport mechanism remains to be elucidated. This is Solute carrier family 25 member 47 from Homo sapiens (Human).